A 336-amino-acid chain; its full sequence is Geranylgeranyl pyrophosphate synthase 6, mitochondrial (336 aa).

A mitochondrion-targeting transit peptide spans 1 to 22 (MRPRYSLILSAMRLIRPSNRRL). Positions 80, 83, and 112 each coordinate isopentenyl diphosphate. The Mg(2+) site is built by aspartate 119 and aspartate 125. Position 130 (arginine 130) interacts with dimethylallyl diphosphate. Arginine 131 is an isopentenyl diphosphate binding site. Dimethylallyl diphosphate is bound by residues lysine 221, threonine 222, glutamine 259, lysine 276, and lysine 286.

The protein belongs to the FPP/GGPP synthase family. In terms of assembly, monomer. Mg(2+) serves as cofactor.

It is found in the mitochondrion. It catalyses the reaction isopentenyl diphosphate + dimethylallyl diphosphate = (2E)-geranyl diphosphate + diphosphate. The catalysed reaction is isopentenyl diphosphate + (2E)-geranyl diphosphate = (2E,6E)-farnesyl diphosphate + diphosphate. The enzyme catalyses isopentenyl diphosphate + (2E,6E)-farnesyl diphosphate = (2E,6E,10E)-geranylgeranyl diphosphate + diphosphate. Its pathway is isoprenoid biosynthesis; farnesyl diphosphate biosynthesis; farnesyl diphosphate from geranyl diphosphate and isopentenyl diphosphate: step 1/1. It functions in the pathway isoprenoid biosynthesis; geranyl diphosphate biosynthesis; geranyl diphosphate from dimethylallyl diphosphate and isopentenyl diphosphate: step 1/1. The protein operates within isoprenoid biosynthesis; geranylgeranyl diphosphate biosynthesis; geranylgeranyl diphosphate from farnesyl diphosphate and isopentenyl diphosphate: step 1/1. Functionally, catalyzes the trans-addition of the three molecules of IPP onto DMAPP to form geranylgeranyl pyrophosphate. This Arabidopsis thaliana (Mouse-ear cress) protein is Geranylgeranyl pyrophosphate synthase 6, mitochondrial.